We begin with the raw amino-acid sequence, 392 residues long: Anhydro-N-acetylmuramic acid kinase (392 aa).

22 to 29 (GTSMDGVD) serves as a coordination point for ATP.

This sequence belongs to the anhydro-N-acetylmuramic acid kinase family.

The catalysed reaction is 1,6-anhydro-N-acetyl-beta-muramate + ATP + H2O = N-acetyl-D-muramate 6-phosphate + ADP + H(+). It participates in amino-sugar metabolism; 1,6-anhydro-N-acetylmuramate degradation. It functions in the pathway cell wall biogenesis; peptidoglycan recycling. Its function is as follows. Catalyzes the specific phosphorylation of 1,6-anhydro-N-acetylmuramic acid (anhMurNAc) with the simultaneous cleavage of the 1,6-anhydro ring, generating MurNAc-6-P. Is required for the utilization of anhMurNAc either imported from the medium or derived from its own cell wall murein, and thus plays a role in cell wall recycling. In Burkholderia mallei (strain NCTC 10229), this protein is Anhydro-N-acetylmuramic acid kinase.